The primary structure comprises 135 residues: Transcriptional activator protein (135 aa).

A Nuclear localization signal motif is present at residues 17–32 (KVQHKIAKKKPIRRKR). Residues 37–54 (CGCSYYLHLNCNNHGFTH) fold into a zinc finger. Composition is skewed to polar residues over residues 77-87 (LFQDNRTQPEA) and 101-115 (IQPQHQEGNGDSQMF). The tract at residues 77 to 117 (LFQDNRTQPEAISNEPRHHFHSDKIQPQHQEGNGDSQMFSR) is disordered. Residues 120–135 (NLDDITASDWSFLKSI) are transactivation.

The protein belongs to the geminiviridae transcriptional activator protein family. As to quaternary structure, monomer. Homodimer. Homooligomer. Self-interaction correlates with nuclear localization and efficient activation of transcription. Monomers suppress local silencing by interacting with and inactivating host adenosine kinase 2 (ADK2) in the cytoplasm. Interacts with and inhibits host SNF1 kinase. Binds to ssDNA. May interact with host RPS27A. Phosphorylated.

The protein localises to the host nucleus. It localises to the host cytoplasm. Functionally, multifunctional protein that modulates host antiviral defenses and promotes host attractiveness to insect vectors. Acts as a suppressor of RNA-mediated gene silencing, also known as post-transcriptional gene silencing (PTGS), a mechanism of plant viral defense that limits the accumulation of viral RNAs. TrAP suppresses the host RNA silencing by inhibiting adenosine kinase 2 (ADK2), a kinase involved in a general methylation pathway. Also suppresses the host basal defense by interacting with and inhibiting SNF1 kinase, a key regulator of cell metabolism implicated in innate antiviral defense. In terms of biological role, inhibits signal transduction by the phytohormone jasmonate, making the infected plant more attractive to aphids, which are the second host to play a role as a dissemination vector. Acts by binding to ubiquitin precursor RPS27A, thereby preventing ubiquitin degradation of JAZ. This chain is Transcriptional activator protein, found in Tomato yellow leaf curl virus (strain Israel) (TYLCV).